The following is a 367-amino-acid chain: Glutamate 5-kinase (367 aa).

Residue Lys-9 participates in ATP binding. The substrate site is built by Ser-49, Asp-136, and Asn-148. ATP-binding positions include 168-169 and 210-216; these read TD and TGGMKSK. The 75-residue stretch at 276–350 folds into the PUA domain; sequence SGQIEVDAGA…GMQSQDIQVR (75 aa).

This sequence belongs to the glutamate 5-kinase family.

The protein resides in the cytoplasm. It catalyses the reaction L-glutamate + ATP = L-glutamyl 5-phosphate + ADP. The protein operates within amino-acid biosynthesis; L-proline biosynthesis; L-glutamate 5-semialdehyde from L-glutamate: step 1/2. Catalyzes the transfer of a phosphate group to glutamate to form L-glutamate 5-phosphate. The polypeptide is Glutamate 5-kinase (Bacillus cereus (strain G9842)).